The chain runs to 207 residues: Guanylate kinase (207 aa).

Residues 4-184 form the Guanylate kinase-like domain; it reads GILFIISAPS…AVNDLITIIT (181 aa). Residue 11–18 participates in ATP binding; sequence APSGTGKS.

It belongs to the guanylate kinase family.

The protein resides in the cytoplasm. The enzyme catalyses GMP + ATP = GDP + ADP. Its function is as follows. Essential for recycling GMP and indirectly, cGMP. The chain is Guanylate kinase (gmk) from Buchnera aphidicola subsp. Acyrthosiphon pisum (strain APS) (Acyrthosiphon pisum symbiotic bacterium).